Reading from the N-terminus, the 291-residue chain is Ribose-phosphate pyrophosphokinase (291 aa).

ATP-binding positions include 34-36 (DGE) and 92-93 (RQ). The Mg(2+) site is built by H125 and D165. K188 is a catalytic residue. The D-ribose 5-phosphate site is built by R190 and D214.

The protein belongs to the ribose-phosphate pyrophosphokinase family. Class III (archaeal) subfamily. Mg(2+) is required as a cofactor.

It localises to the cytoplasm. It catalyses the reaction D-ribose 5-phosphate + ATP = 5-phospho-alpha-D-ribose 1-diphosphate + AMP + H(+). The protein operates within metabolic intermediate biosynthesis; 5-phospho-alpha-D-ribose 1-diphosphate biosynthesis; 5-phospho-alpha-D-ribose 1-diphosphate from D-ribose 5-phosphate (route I): step 1/1. In terms of biological role, involved in the biosynthesis of the central metabolite phospho-alpha-D-ribosyl-1-pyrophosphate (PRPP) via the transfer of pyrophosphoryl group from ATP to 1-hydroxyl of ribose-5-phosphate (Rib-5-P). This chain is Ribose-phosphate pyrophosphokinase, found in Methanopyrus kandleri (strain AV19 / DSM 6324 / JCM 9639 / NBRC 100938).